Here is a 384-residue protein sequence, read N- to C-terminus: Lipid-A-disaccharide synthase (384 aa).

The protein belongs to the LpxB family.

The catalysed reaction is a lipid X + a UDP-2-N,3-O-bis[(3R)-3-hydroxyacyl]-alpha-D-glucosamine = a lipid A disaccharide + UDP + H(+). Its pathway is bacterial outer membrane biogenesis; LPS lipid A biosynthesis. Condensation of UDP-2,3-diacylglucosamine and 2,3-diacylglucosamine-1-phosphate to form lipid A disaccharide, a precursor of lipid A, a phosphorylated glycolipid that anchors the lipopolysaccharide to the outer membrane of the cell. This Cellvibrio japonicus (strain Ueda107) (Pseudomonas fluorescens subsp. cellulosa) protein is Lipid-A-disaccharide synthase.